We begin with the raw amino-acid sequence, 444 residues long: Elongation factor 1-alpha (444 aa).

Residues 15 to 238 (KPHINLAVVG…DSFQPPQRPV (224 aa)) enclose the tr-type G domain. The interval 24-31 (GHVDNGKS) is G1. GTP is bound at residue 24–31 (GHVDNGKS). S31 contacts Mg(2+). A G2 region spans residues 80–84 (GVTIE). Residues 101–104 (DLPG) form a G3 region. Residues 101–105 (DLPGH) and 163–166 (NKMD) contribute to the GTP site. A G4 region spans residues 163 to 166 (NKMD). Residues 202–204 (SAI) are G5.

This sequence belongs to the TRAFAC class translation factor GTPase superfamily. Classic translation factor GTPase family. EF-Tu/EF-1A subfamily.

Its subcellular location is the cytoplasm. The enzyme catalyses GTP + H2O = GDP + phosphate + H(+). Functionally, GTP hydrolase that promotes the GTP-dependent binding of aminoacyl-tRNA to the A-site of ribosomes during protein biosynthesis. This chain is Elongation factor 1-alpha, found in Pyrobaculum aerophilum (strain ATCC 51768 / DSM 7523 / JCM 9630 / CIP 104966 / NBRC 100827 / IM2).